The sequence spans 156 residues: Putative pre-16S rRNA nuclease (156 aa).

It belongs to the YqgF nuclease family.

It is found in the cytoplasm. Functionally, could be a nuclease involved in processing of the 5'-end of pre-16S rRNA. The sequence is that of Putative pre-16S rRNA nuclease from Albidiferax ferrireducens (strain ATCC BAA-621 / DSM 15236 / T118) (Rhodoferax ferrireducens).